Consider the following 131-residue polypeptide: MRHYEIVFMVHPDQSEQVPGMIERYTGAITAAAGTIHRLEDWGRRQLAYPINKLHKAHYVLMNVEAPQEAIDELETNFRFNDAVIRSMVMRTKHAVTEASPMVKAKDERRERREDFANETADDSEAGDSEE.

Residues 98–131 are disordered; it reads EASPMVKAKDERRERREDFANETADDSEAGDSEE. Over residues 104 to 116 the composition is skewed to basic and acidic residues; that stretch reads KAKDERRERREDF. Acidic residues predominate over residues 120–131; sequence TADDSEAGDSEE.

It belongs to the bacterial ribosomal protein bS6 family.

Its function is as follows. Binds together with bS18 to 16S ribosomal RNA. This is Small ribosomal subunit protein bS6 from Klebsiella pneumoniae subsp. pneumoniae (strain ATCC 700721 / MGH 78578).